Here is a 348-residue protein sequence, read N- to C-terminus: 3-keto-steroid reductase (348 aa).

NADP(+) contacts are provided by leucine 18, threonine 41, and arginine 47. Active-site proton donor residues include serine 180 and tyrosine 203. 3 residues coordinate NADP(+): tyrosine 203, lysine 207, and serine 238. Catalysis depends on lysine 207, which acts as the Lowers pKa of active site Tyr.

It belongs to the short-chain dehydrogenases/reductases (SDR) family. ERG27 subfamily.

The enzyme catalyses a 3beta-hydroxysteroid + NADP(+) = a 3-oxosteroid + NADPH + H(+). Its pathway is steroid biosynthesis; zymosterol biosynthesis; zymosterol from lanosterol: step 5/6. Its function is as follows. Responsible for the reduction of the keto group on the C-3 of sterols. The polypeptide is 3-keto-steroid reductase (ERG27) (Candida glabrata (strain ATCC 2001 / BCRC 20586 / JCM 3761 / NBRC 0622 / NRRL Y-65 / CBS 138) (Yeast)).